A 453-amino-acid chain; its full sequence is Ribulose bisphosphate carboxylase large chain (453 aa).

Residues 1 to 2 constitute a propeptide that is removed on maturation; that stretch reads MS. An N-acetylproline modification is found at proline 3. An N6,N6,N6-trimethyllysine modification is found at lysine 14. Substrate-binding residues include asparagine 123 and threonine 173. Lysine 175 (proton acceptor) is an active-site residue. Lysine 177 serves as a coordination point for substrate. Residues lysine 201, aspartate 203, and glutamate 204 each coordinate Mg(2+). An N6-carboxylysine modification is found at lysine 201. Histidine 294 serves as the catalytic Proton acceptor. Residues arginine 295, histidine 327, and serine 379 each coordinate substrate.

Belongs to the RuBisCO large chain family. Type I subfamily. As to quaternary structure, heterohexadecamer of 8 large chains and 8 small chains; disulfide-linked. The disulfide link is formed within the large subunit homodimers. Mg(2+) is required as a cofactor. The disulfide bond which can form in the large chain dimeric partners within the hexadecamer appears to be associated with oxidative stress and protein turnover.

It localises to the plastid. Its subcellular location is the chloroplast. It catalyses the reaction 2 (2R)-3-phosphoglycerate + 2 H(+) = D-ribulose 1,5-bisphosphate + CO2 + H2O. The enzyme catalyses D-ribulose 1,5-bisphosphate + O2 = 2-phosphoglycolate + (2R)-3-phosphoglycerate + 2 H(+). Functionally, ruBisCO catalyzes two reactions: the carboxylation of D-ribulose 1,5-bisphosphate, the primary event in carbon dioxide fixation, as well as the oxidative fragmentation of the pentose substrate in the photorespiration process. Both reactions occur simultaneously and in competition at the same active site. The polypeptide is Ribulose bisphosphate carboxylase large chain (Valantia muralis (Wall valantia)).